A 228-amino-acid polypeptide reads, in one-letter code: Chaperone protein FanE (228 aa).

The N-terminal stretch at 1–19 (MNKFISIIALCVFSSYANA) is a signal peptide. Residues C157 and C198 are joined by a disulfide bond.

Belongs to the periplasmic pilus chaperone family.

Its subcellular location is the periplasm. In terms of biological role, mediates assembly of pili by forming soluble multimeric complexes with pili subunits as an intermediate step in the assembly process. This protein is involved in K99 pili assembly. The polypeptide is Chaperone protein FanE (fanE) (Escherichia coli).